Here is a 711-residue protein sequence, read N- to C-terminus: Hydroperoxide isomerase ALOXE3 (711 aa).

A PLAT domain is found at 2-119; sequence AVYRLCVTTG…TVELRPGTAR (118 aa). Residues 119 to 711 enclose the Lipoxygenase domain; sequence RTICQDALPL…PPLIENSVSI (593 aa). Fe cation is bound by residues His408, His413, His588, Asn592, and Ile711.

It belongs to the lipoxygenase family. Requires Fe cation as cofactor.

It localises to the cytoplasm. It carries out the reaction a hydroperoxyeicosatetraenoate = a hydroxy-epoxy-eicosatetraenoate. It catalyses the reaction a hydroperoxyeicosatetraenoate = an oxoeicosatetraenoate + H2O. The enzyme catalyses (12R)-hydroperoxy-(5Z,8Z,10E,14Z)-eicosatetraenoate = (8R)-hydroxy-(11R,12R)-epoxy-(5Z,9E,14Z)-eicosatrienoate. The catalysed reaction is (12S)-hydroperoxy-(5Z,8Z,10E,14Z)-eicosatetraenoate = (8R)-hydroxy-(11S,12S)-epoxy-(5Z,9E,14Z)-eicosatrienoate. It carries out the reaction (12S)-hydroperoxy-(5Z,8Z,10E,14Z)-eicosatetraenoate = (10R)-hydroxy-(11S,12S)-epoxy-(5Z,8Z,14Z)-eicosatrienoate. It catalyses the reaction (15S)-hydroperoxy-(5Z,8Z,11Z,13E)-eicosatetraenoate = (13R)-hydroxy-(14S,15S)-epoxy-(5Z,8Z,11Z)-eicosatrienoate. The enzyme catalyses (5S)-hydroperoxy-(6E,8Z,11Z,14Z)-eicosatetraenoate = 7R-hydroxy-5S,6S-epoxy-(8Z,11Z,14Z)-eicosatrienoate. The catalysed reaction is (13S)-hydroperoxy-(9Z,11E)-octadecadienoate = 11-hydroxy-(12S,13S)-epoxy-(9Z)-octadecenoate. It carries out the reaction N-[omega-(9R)-hydroperoxy-(10E,12Z)-octadecadienoyloxy]acyl-beta-D-glucosyl-(1&lt;-&gt;1)-octadecasphing-4E-enine = a N-[omega-(9R,10R)-epoxy-(13R)-hydroxy-(11E)-octadecenoyloxy]acyl-beta-D-glucosyl-(1&lt;-&gt;1)-sphing-4E-enine. It catalyses the reaction a N-[omega-(9R)-hydroperoxy-(10E,12Z)-octadecadienoyloxy]-acylsphin-4E-enine = a N-[omega-(9R,10R)-epoxy-(13R)-hydroxy-(11E)-octadecenoyloxy]-acylsphing-4E-enine. The enzyme catalyses (12R)-hydroperoxy-(5Z,8Z,10E,14Z)-eicosatetraenoate = 12-oxo-(5Z,8Z,10E,14Z)-eicosatetraenoate + H2O. The catalysed reaction is (12S)-hydroperoxy-(5Z,8Z,10E,14Z)-eicosatetraenoate = 12-oxo-(5Z,8Z,10E,14Z)-eicosatetraenoate + H2O. It carries out the reaction (15S)-hydroperoxy-(5Z,8Z,11Z,13E)-eicosatetraenoate = 15-oxo-(5Z,8Z,11Z,13E)-eicosatetraenoate + H2O. It catalyses the reaction (13S)-hydroperoxy-(9Z,11E)-octadecadienoate = 13-oxo-(9Z,11E)-octadecadienoate + H2O. The enzyme catalyses (8S)-hydroperoxy-(5Z,9E,11Z,14Z)-eicosatetraenoate = (10R)-hydroxy-(8S,9S)-epoxy-(5Z,11Z,14Z)-eicosatrienoate. The catalysed reaction is (8R)-hydroperoxy-(5Z,9E,11Z,14Z)-eicosatetraenoate = 8-oxo-(5Z,9E,11Z,14Z)-eicosatetraenoate + H2O. It carries out the reaction (8S)-hydroperoxy-(5Z,9E,11Z,14Z)-eicosatetraenoate = 8-oxo-(5Z,9E,11Z,14Z)-eicosatetraenoate + H2O. It participates in lipid metabolism; hydroperoxy eicosatetraenoic acid biosynthesis. The protein operates within lipid metabolism; sphingolipid metabolism. Its function is as follows. Non-heme iron-containing lipoxygenase which is atypical in that it displays a prominent hydroperoxide isomerase activity and a reduced lipoxygenases activity. The hydroperoxide isomerase activity catalyzes the isomerization of hydroperoxides, derived from arachidonic and linoleic acid by ALOX12B, into hepoxilin-type epoxyalcohols and ketones. In presence of oxygen, oxygenates polyunsaturated fatty acids, including arachidonic acid, to produce fatty acid hydroperoxides. In the skin, acts downstream of ALOX12B on the linoleate moiety of esterified omega-hydroxyacyl-sphingosine (EOS) ceramides to produce an epoxy-ketone derivative, a crucial step in the conjugation of omega-hydroxyceramide to membrane proteins. Therefore plays a crucial role in the synthesis of corneocytes lipid envelope and the establishment of the skin barrier to water loss. In parallel, it may have a signaling function in barrier formation through the production of hepoxilins metabolites. Also plays a role in adipocyte differentiation through hepoxilin A3 and hepoxilin B3 production which in turn activate PPARG. Through the production of hepoxilins in the spinal cord, it may regulate inflammatory tactile allodynia. The polypeptide is Hydroperoxide isomerase ALOXE3 (Rattus norvegicus (Rat)).